The sequence spans 159 residues: Growth arrest and DNA damage-inducible protein GADD45 gamma (159 aa).

Residues 43 to 86 (VYESAKVLNVDPDNVTFCVLAADEEDEGDIALQIHFTLIQAFCC) are homodimerization.

Belongs to the GADD45 family. As to quaternary structure, undergoes concentration-dependent homodimerization, which is required for growth inhibititory activity and enhances interaction with PCNA. Interacts with GADD45GIP1. Interacts with PCNA.

Its function is as follows. Involved in the regulation of growth and apoptosis. Mediates activation of stress-responsive MTK1/MEKK4 MAPKKK. In Rattus norvegicus (Rat), this protein is Growth arrest and DNA damage-inducible protein GADD45 gamma (Gadd45g).